Reading from the N-terminus, the 315-residue chain is GTPase Era (315 aa).

The Era-type G domain occupies 21–190 (RSGFVAIVGR…QSALEARLDP (170 aa)). Residues 29-36 (GRPNVGKS) form a G1 region. Residue 29–36 (GRPNVGKS) coordinates GTP. The segment at 55 to 59 (QTTRN) is G2. Positions 76-79 (DTPG) are G3. GTP-binding positions include 76–80 (DTPGI) and 138–141 (NKQD). The G4 stretch occupies residues 138–141 (NKQD). A G5 region spans residues 169-171 (FSA). The region spanning 221-297 (TRQEVPHSVA…YLKLFVKVEP (77 aa)) is the KH type-2 domain.

The protein belongs to the TRAFAC class TrmE-Era-EngA-EngB-Septin-like GTPase superfamily. Era GTPase family. As to quaternary structure, monomer.

Its subcellular location is the cytoplasm. It is found in the cell inner membrane. In terms of biological role, an essential GTPase that binds both GDP and GTP, with rapid nucleotide exchange. Plays a role in 16S rRNA processing and 30S ribosomal subunit biogenesis and possibly also in cell cycle regulation and energy metabolism. This chain is GTPase Era, found in Synechocystis sp. (strain ATCC 27184 / PCC 6803 / Kazusa).